The sequence spans 202 residues: Small ribosomal subunit protein uS4c (202 aa).

One can recognise an S4 RNA-binding domain in the interval 90 to 148; sequence MRLDNVIFRLGMSSTIPGARQLVNHRHIMINDEMVDTPGYNCKPRDIITLKNISESRSG.

This sequence belongs to the universal ribosomal protein uS4 family. As to quaternary structure, part of the 30S ribosomal subunit. Contacts protein S5. The interaction surface between S4 and S5 is involved in control of translational fidelity.

The protein resides in the plastid. It is found in the chloroplast. One of the primary rRNA binding proteins, it binds directly to 16S rRNA where it nucleates assembly of the body of the 30S subunit. Functionally, with S5 and S12 plays an important role in translational accuracy. The chain is Small ribosomal subunit protein uS4c (rps4) from Haplomitrium hookeri (Hooker's flapwort).